The sequence spans 60 residues: uncharacterized protein (60 aa).

This is an uncharacterized protein from Enterobacteria phage T4 (Bacteriophage T4).